Consider the following 54-residue polypeptide: Large ribosomal subunit protein bL33 (54 aa).

The protein belongs to the bacterial ribosomal protein bL33 family.

The polypeptide is Large ribosomal subunit protein bL33 (Corynebacterium diphtheriae (strain ATCC 700971 / NCTC 13129 / Biotype gravis)).